A 167-amino-acid polypeptide reads, in one-letter code: 3-isopropylmalate dehydratase small subunit (167 aa).

This sequence belongs to the LeuD family. LeuD type 2 subfamily. Heterodimer of LeuC and LeuD.

The enzyme catalyses (2R,3S)-3-isopropylmalate = (2S)-2-isopropylmalate. The protein operates within amino-acid biosynthesis; L-leucine biosynthesis; L-leucine from 3-methyl-2-oxobutanoate: step 2/4. Catalyzes the isomerization between 2-isopropylmalate and 3-isopropylmalate, via the formation of 2-isopropylmaleate. In Oleidesulfovibrio alaskensis (strain ATCC BAA-1058 / DSM 17464 / G20) (Desulfovibrio alaskensis), this protein is 3-isopropylmalate dehydratase small subunit.